The primary structure comprises 477 residues: MSGVMCLKASDTWASGIRSQPQGCLGKWRSMRCKHTRMHLAHLGNSRQLISLGPPRTREDGSRISQQVEQSRSQVQAIGEKVSLAQAKIEKIKGSKKAIKVFSSAKYPAPERLQEYGSIFTDAQDPGLQRRPRHRIQSKQRPLDERALQEKLKDFPVCVSTKPEPEDDAEEGLGGLPSNISSVSSLLLFNTTENLYKKYVFLDPLAGAVTKTHVMLGAETEEKLFDAPLSISKREQLEQQVPENYFYVPDLGQVPEIDVPSYLPDLPGIANDLMYIADLGPGIAPSAPGTIPELPTFHTEVAEPLKVDLQDGVLTPPPPPPPPPPAPEVLASAPPLPPSTAAPVGQGARQDDSSSSASPSVQGAPREVVDPSGGWATLLESIRQAGGIGKAKLRSMKERKLEKQQQKEQEQVRATSQGGHLMSDLFNKLVMRRKGISGKGPGAGDGPGGAFARVSDSIPPLPPPQQPQAEDEDDWES.

Residues 1-180 (MSGVMCLKAS…EGLGGLPSNI (180 aa)) form a WHD1 region. Disordered stretches follow at residues 310–420 (QDGV…QGGH) and 434–477 (KGIS…DWES). Positions 315 to 327 (TPPPPPPPPPPAP) are enriched in pro residues. The tract at residues 362-477 (QGAPREVVDP…QAEDEDDWES (116 aa)) is VCA. A WH2 domain is found at 374-396 (GWATLLESIRQAGGIGKAKLRSM). Basic and acidic residues predominate over residues 395–411 (SMKERKLEKQQQKEQEQ). A compositionally biased stretch (gly residues) spans 437–449 (SGKGPGAGDGPGG).

It belongs to the WASH1 family. As to quaternary structure, interacts (via WHD1 region) with WASHC2C; the interaction is direct.

Its subcellular location is the early endosome membrane. The protein resides in the recycling endosome membrane. Functionally, may act as a nucleation-promoting factor at the surface of endosomes, where it recruits and activates the Arp2/3 complex to induce actin polymerization, playing a key role in the fission of tubules that serve as transport intermediates during endosome sorting. In Homo sapiens (Human), this protein is Putative WAS protein family homolog 4 (WASH4P).